We begin with the raw amino-acid sequence, 434 residues long: NFATC2-interacting protein (434 aa).

2 disordered regions span residues 1-63 (MGSP…TPAL) and 176-237 (GSED…RAYN). The segment covering 28-59 (GPQPCPKPRGPQPCPKPRGPQPCPKPRGPQPC) has biased composition (pro residues). The segment covering 228-237 (PVRRKGRAYN) has biased composition (basic residues). The 77-residue stretch at 275–351 (PELTVKVRRG…IDCVVLSPPD (77 aa)) folds into the Ubiquitin-like domain.

It localises to the nucleus. The protein resides in the cytoplasm. In terms of biological role, regulates the magnitude of NFAT-driven transcription of a specific subset of cytokine genes. In Xenopus tropicalis (Western clawed frog), this protein is NFATC2-interacting protein (nfatc2ip).